The chain runs to 1062 residues: Translation initiation factor IF-2 (1062 aa).

The interval 34–463 (SASSTVEAPV…RMGAMVPRGN (430 aa)) is disordered. Over residues 76–121 (PTPPSRPGLAPRPGPRPVPGRPGPLGRPGPATPAPSPSPASPPLPA) the composition is skewed to pro residues. The span at 122-153 (SPVQASPVQASPVQASPTSAPAAPRPAAASAV) shows a compositional bias: low complexity. A compositionally biased stretch (pro residues) spans 154–178 (PAPPMPSVPSAPSGPRPGPNAPRPG). Over residues 198-214 (TAGGPTAGGPTAGGPTA) the composition is skewed to gly residues. Residues 294–305 (RPTPGGMPPRPG) are compositionally biased toward pro residues. Composition is skewed to gly residues over residues 307–324 (PRSG…GTGG) and 344–430 (PGGG…GGRG). Residues 431–442 (RPGRQRKSKRAK) are compositionally biased toward basic residues. The region spanning 555–727 (SRPPVVTVMG…IVLTADASLD (173 aa)) is the tr-type G domain. The G1 stretch occupies residues 564–571 (GHVDHGKT). GTP is bound at residue 564-571 (GHVDHGKT). Residues 589–593 (GITQH) are G2. The G3 stretch occupies residues 614–617 (DTPG). Residues 614 to 618 (DTPGH) and 668 to 671 (NKVD) each bind GTP. The G4 stretch occupies residues 668 to 671 (NKVD). Residues 704-706 (SAR) are G5.

The protein belongs to the TRAFAC class translation factor GTPase superfamily. Classic translation factor GTPase family. IF-2 subfamily.

It is found in the cytoplasm. Functionally, one of the essential components for the initiation of protein synthesis. Protects formylmethionyl-tRNA from spontaneous hydrolysis and promotes its binding to the 30S ribosomal subunits. Also involved in the hydrolysis of GTP during the formation of the 70S ribosomal complex. This Frankia casuarinae (strain DSM 45818 / CECT 9043 / HFP020203 / CcI3) protein is Translation initiation factor IF-2.